We begin with the raw amino-acid sequence, 721 residues long: Polyribonucleotide nucleotidyltransferase (721 aa).

The Mg(2+) site is built by aspartate 490 and aspartate 496. The region spanning 557 to 623 is the KH domain; the sequence is PRIISIKINP…RIAGLTKEAK (67 aa). The S1 motif domain maps to 625–693; the sequence is GEEYEGTVVK…DRGKIDLIRP (69 aa). Residues 693-721 are disordered; sequence PELEGKIAPREPRAPRGGGDRGPRPPRRD.

This sequence belongs to the polyribonucleotide nucleotidyltransferase family. Requires Mg(2+) as cofactor.

It localises to the cytoplasm. The catalysed reaction is RNA(n+1) + phosphate = RNA(n) + a ribonucleoside 5'-diphosphate. In terms of biological role, involved in mRNA degradation. Catalyzes the phosphorolysis of single-stranded polyribonucleotides processively in the 3'- to 5'-direction. The sequence is that of Polyribonucleotide nucleotidyltransferase from Deinococcus deserti (strain DSM 17065 / CIP 109153 / LMG 22923 / VCD115).